We begin with the raw amino-acid sequence, 83 residues long: U20-theraphotoxin-Cg1a 1 (83 aa).

Positions 1–21 (MKVSVLITLAVLGVMFVWTSA) are cleaved as a signal peptide. The propeptide occupies 22 to 47 (AELEERGSDQPAWLKSLERIFQSEER). Intrachain disulfides connect Cys49-Cys63, Cys56-Cys68, and Cys62-Cys76.

The protein belongs to the neurotoxin 10 (Hwtx-1) family. 40 (Jztx-35) subfamily. Expressed by the venom gland.

It is found in the secreted. Functionally, probable ion channel inhibitor. This chain is U20-theraphotoxin-Cg1a 1, found in Chilobrachys guangxiensis (Chinese earth tiger tarantula).